Reading from the N-terminus, the 353-residue chain is Dihydroorotate dehydrogenase (quinone) (353 aa).

FMN contacts are provided by residues 66–70 and Thr90; that span reads AGFDK. Residue Lys70 coordinates substrate. 115–119 serves as a coordination point for substrate; sequence NRMGF. 2 residues coordinate FMN: Asn143 and Asn176. Substrate is bound at residue Asn176. The active-site Nucleophile is Ser179. Asn181 contributes to the substrate binding site. The FMN site is built by Lys212 and Thr240. 241-242 serves as a coordination point for substrate; it reads NT. FMN is bound by residues Gly264, Gly293, and 314 to 315; that span reads YT.

It belongs to the dihydroorotate dehydrogenase family. Type 2 subfamily. Monomer. FMN is required as a cofactor.

It is found in the cell membrane. It catalyses the reaction (S)-dihydroorotate + a quinone = orotate + a quinol. The protein operates within pyrimidine metabolism; UMP biosynthesis via de novo pathway; orotate from (S)-dihydroorotate (quinone route): step 1/1. In terms of biological role, catalyzes the conversion of dihydroorotate to orotate with quinone as electron acceptor. The polypeptide is Dihydroorotate dehydrogenase (quinone) (Mycolicibacterium vanbaalenii (strain DSM 7251 / JCM 13017 / BCRC 16820 / KCTC 9966 / NRRL B-24157 / PYR-1) (Mycobacterium vanbaalenii)).